Consider the following 98-residue polypeptide: Co-chaperonin GroES (98 aa).

This sequence belongs to the GroES chaperonin family. Heptamer of 7 subunits arranged in a ring. Interacts with the chaperonin GroEL.

It is found in the cytoplasm. Together with the chaperonin GroEL, plays an essential role in assisting protein folding. The GroEL-GroES system forms a nano-cage that allows encapsulation of the non-native substrate proteins and provides a physical environment optimized to promote and accelerate protein folding. GroES binds to the apical surface of the GroEL ring, thereby capping the opening of the GroEL channel. The polypeptide is Co-chaperonin GroES (Kineococcus radiotolerans (strain ATCC BAA-149 / DSM 14245 / SRS30216)).